The following is a 130-amino-acid chain: Astrocytic phosphoprotein PEA-15 (130 aa).

One can recognise a DED domain in the interval glutamate 3–aspartate 81. Phosphoserine is present on residues serine 61 and serine 90. Residues lysine 98–lysine 107 are microtubule-binding. A Phosphoserine; by PKC modification is found at serine 104. A Phosphoserine; by CaMK2 modification is found at serine 116. The segment at lysine 122–lysine 129 is microtubule-binding.

Binds RPS6KA3, MAPK3 and MAPK1. Interacts with CASP8 and FADD. Transient interaction with PLD1 and PLD2. Phosphorylated by protein kinase C and calcium-calmodulin-dependent protein kinase. These phosphorylation events are modulated by neurotransmitters or hormones. In terms of tissue distribution, predominantly expressed in the brain. Low levels in some peripheral organs.

The protein resides in the cytoplasm. In terms of biological role, blocks Ras-mediated inhibition of integrin activation and modulates the ERK MAP kinase cascade. Inhibits RPS6KA3 activities by retaining it in the cytoplasm. Inhibits both TNFRSF6- and TNFRSF1A-mediated CASP8 activity and apoptosis. Regulates glucose transport by controlling both the content of SLC2A1 glucose transporters on the plasma membrane and the insulin-dependent trafficking of SLC2A4 from the cell interior to the surface. The protein is Astrocytic phosphoprotein PEA-15 (Pea15) of Mus musculus (Mouse).